The sequence spans 275 residues: Phosphonates import ATP-binding protein PhnC (275 aa).

An ABC transporter domain is found at 2–246; the sequence is LKIENLTKRY…ALTEIYGEEE (245 aa). 35–42 contributes to the ATP binding site; sequence GPSGAGKS.

This sequence belongs to the ABC transporter superfamily. Phosphonates importer (TC 3.A.1.9.1) family. In terms of assembly, the complex is composed of two ATP-binding proteins (PhnC), two transmembrane proteins (PhnE) and a solute-binding protein (PhnD).

Its subcellular location is the cell inner membrane. It catalyses the reaction phosphonate(out) + ATP + H2O = phosphonate(in) + ADP + phosphate + H(+). Functionally, part of the ABC transporter complex PhnCDE involved in phosphonates import. Responsible for energy coupling to the transport system. This Wolinella succinogenes (strain ATCC 29543 / DSM 1740 / CCUG 13145 / JCM 31913 / LMG 7466 / NCTC 11488 / FDC 602W) (Vibrio succinogenes) protein is Phosphonates import ATP-binding protein PhnC.